Reading from the N-terminus, the 164-residue chain is Cytochrome c oxidase subunit 4, mitochondrial (164 aa).

The N-terminal 33 residues, 1 to 33 (MFMNSMLRVSRQRAAVRSTVSLYRGFVSASIRR), are a transit peptide targeting the mitochondrion. The Zn(2+) site is built by Cys-120, His-128, Cys-143, and Cys-146.

Belongs to the cytochrome c oxidase subunit 5B family. As to quaternary structure, component of the cytochrome c oxidase (complex IV, CIV), a multisubunit enzyme composed of a catalytic core of 3 subunits and several supernumerary subunits. The complex exists as a monomer or a dimer and forms supercomplexes (SCs) in the inner mitochondrial membrane with ubiquinol-cytochrome c oxidoreductase (cytochrome b-c1 complex, complex III, CIII).

The protein localises to the mitochondrion inner membrane. The protein operates within energy metabolism; oxidative phosphorylation. Component of the cytochrome c oxidase, the last enzyme in the mitochondrial electron transport chain which drives oxidative phosphorylation. The respiratory chain contains 3 multisubunit complexes succinate dehydrogenase (complex II, CII), ubiquinol-cytochrome c oxidoreductase (cytochrome b-c1 complex, complex III, CIII) and cytochrome c oxidase (complex IV, CIV), that cooperate to transfer electrons derived from NADH and succinate to molecular oxygen, creating an electrochemical gradient over the inner membrane that drives transmembrane transport and the ATP synthase. Cytochrome c oxidase is the component of the respiratory chain that catalyzes the reduction of oxygen to water. Electrons originating from reduced cytochrome c in the intermembrane space (IMS) are transferred via the dinuclear copper A center (CU(A)) of subunit 2 and heme A of subunit 1 to the active site in subunit 1, a binuclear center (BNC) formed by heme A3 and copper B (CU(B)). The BNC reduces molecular oxygen to 2 water molecules using 4 electrons from cytochrome c in the IMS and 4 protons from the mitochondrial matrix. The protein is Cytochrome c oxidase subunit 4, mitochondrial (cox4) of Schizosaccharomyces pombe (strain 972 / ATCC 24843) (Fission yeast).